The sequence spans 380 residues: Cytochrome b (380 aa).

The next 4 membrane-spanning stretches (helical) occupy residues 34 to 54, 78 to 99, 114 to 134, and 179 to 199; these read FGSL…FLAM, WLLR…YMHI, WNIG…GYVL, and FFAF…VHLL. Heme b-binding residues include His84 and His98. Heme b is bound by residues His183 and His197. An a ubiquinone-binding site is contributed by His202. Helical transmembrane passes span 227-247, 289-309, 321-341, and 348-368; these read YKDV…ALFS, LGGV…PFVH, LAQV…WLGG, and YIFL…LFIP.

Belongs to the cytochrome b family. The cytochrome bc1 complex contains 3 respiratory subunits (MT-CYB, CYC1 and UQCRFS1), 2 core proteins (UQCRC1 and UQCRC2) and probably 6 low-molecular weight proteins. Heme b is required as a cofactor.

Its subcellular location is the mitochondrion inner membrane. Component of the ubiquinol-cytochrome c reductase complex (complex III or cytochrome b-c1 complex) that is part of the mitochondrial respiratory chain. The b-c1 complex mediates electron transfer from ubiquinol to cytochrome c. Contributes to the generation of a proton gradient across the mitochondrial membrane that is then used for ATP synthesis. This Branchiostoma lanceolatum (Common lancelet) protein is Cytochrome b (MT-CYB).